A 279-amino-acid polypeptide reads, in one-letter code: uncharacterized protein (279 aa).

Residues 233 to 279 (NDHQLHDSPLCSDVSDSTSNNNYDESLNFSNDNNNSSFNDFDDDNFI) form a disordered region. Residues 246 to 259 (VSDSTSNNNYDESL) are compositionally biased toward polar residues. The segment covering 260 to 271 (NFSNDNNNSSFN) has biased composition (low complexity).

This is an uncharacterized protein from Buchnera aphidicola subsp. Baizongia pistaciae (strain Bp).